The following is an 88-amino-acid chain: Acylphosphatase (88 aa).

The Acylphosphatase-like domain occupies 3 to 88; that stretch reads AVDVLISGRV…RAGHQGFEVR (86 aa). Active-site residues include Arg-18 and Asn-36.

Belongs to the acylphosphatase family.

It catalyses the reaction an acyl phosphate + H2O = a carboxylate + phosphate + H(+). This chain is Acylphosphatase (acyP), found in Methanocella arvoryzae (strain DSM 22066 / NBRC 105507 / MRE50).